The sequence spans 280 residues: Phosphonates import ATP-binding protein PhnC 1 (280 aa).

The ABC transporter domain occupies 3–247; it reads FRLDAASVSY…LLRELYASES (245 aa). 36–43 contributes to the ATP binding site; the sequence is GPSGAGKT.

It belongs to the ABC transporter superfamily. Phosphonates importer (TC 3.A.1.9.1) family. The complex is composed of two ATP-binding proteins (PhnC), two transmembrane proteins (PhnE) and a solute-binding protein (PhnD).

The protein localises to the cell inner membrane. It catalyses the reaction phosphonate(out) + ATP + H2O = phosphonate(in) + ADP + phosphate + H(+). Functionally, part of the ABC transporter complex PhnCDE involved in phosphonates import. Responsible for energy coupling to the transport system. This chain is Phosphonates import ATP-binding protein PhnC 1, found in Cupriavidus necator (strain ATCC 17699 / DSM 428 / KCTC 22496 / NCIMB 10442 / H16 / Stanier 337) (Ralstonia eutropha).